A 325-amino-acid chain; its full sequence is Post-GPI attachment to proteins factor 2-like (325 aa).

Transmembrane regions (helical) follow at residues 80-100 (VVTALLPLVTLFTCFVTAYVF), 130-150 (YFWRFSIALHIGPRIPIAFVY), 171-191 (LLITLILVLNCIEIASLGGVT), 205-225 (IFITFMVCSLCYMLATIKLNG), 243-263 (WKKILFAVSILSTVGLLVFFA), and 276-296 (WFAFFEYLIAIANMLFHFTII).

The protein belongs to the PGAP2 family.

The protein localises to the membrane. The protein is Post-GPI attachment to proteins factor 2-like of Drosophila melanogaster (Fruit fly).